The primary structure comprises 200 residues: 3-isopropylmalate dehydratase small subunit (200 aa).

It belongs to the LeuD family. LeuD type 1 subfamily. Heterodimer of LeuC and LeuD.

The enzyme catalyses (2R,3S)-3-isopropylmalate = (2S)-2-isopropylmalate. It functions in the pathway amino-acid biosynthesis; L-leucine biosynthesis; L-leucine from 3-methyl-2-oxobutanoate: step 2/4. In terms of biological role, catalyzes the isomerization between 2-isopropylmalate and 3-isopropylmalate, via the formation of 2-isopropylmaleate. The sequence is that of 3-isopropylmalate dehydratase small subunit from Pectobacterium atrosepticum (strain SCRI 1043 / ATCC BAA-672) (Erwinia carotovora subsp. atroseptica).